A 232-amino-acid polypeptide reads, in one-letter code: Thiamine import ATP-binding protein ThiQ (232 aa).

The ABC transporter domain occupies 2–230; that stretch reads LKLTDITWLY…KASASALLGI (229 aa). An ATP-binding site is contributed by 32–39; sequence GPSGAGKS.

This sequence belongs to the ABC transporter superfamily. Thiamine importer (TC 3.A.1.19.1) family. In terms of assembly, the complex is composed of two ATP-binding proteins (ThiQ), two transmembrane proteins (ThiP) and a solute-binding protein (ThiB).

The protein localises to the cell inner membrane. It carries out the reaction thiamine(out) + ATP + H2O = thiamine(in) + ADP + phosphate + H(+). Part of the ABC transporter complex ThiBPQ involved in thiamine import. Responsible for energy coupling to the transport system. The chain is Thiamine import ATP-binding protein ThiQ from Escherichia coli (strain K12).